A 467-amino-acid polypeptide reads, in one-letter code: Tripartite motif-containing protein 75 (467 aa).

The RING-type zinc finger occupies 16–57 (CPICLDDLTDPVTVECGHNFCRSCIKDFWAGQQATSSCPVCR). Residues 90–131 (ESSTSCERHNQALTLFCEDDLQLLCDQCVEPESHGRHQVLSI) form a B box-type zinc finger. Residues Cys95, His98, Cys117, and His123 each coordinate Zn(2+). Positions 168-222 (VTLREQAEAQRSQLTSECEKLMRFLDQEERAAFSRLEDEEMRLEKRLLDNIAALE) form a coiled coil. Residues 276–466 (YSFPLQYSAL…LRLCSATDSE (191 aa)) form the B30.2/SPRY domain.

This sequence belongs to the TRIM/RBCC family.

It localises to the cytoplasm. Its subcellular location is the cytoskeleton. It is found in the spindle. Functionally, may play a role in female meiosis. In Mus musculus (Mouse), this protein is Tripartite motif-containing protein 75.